Here is a 246-residue protein sequence, read N- to C-terminus: UDP-N-acetyl-D-mannosaminuronic acid transferase (246 aa).

The protein belongs to the glycosyltransferase 26 family.

It carries out the reaction UDP-N-acetyl-alpha-D-mannosaminouronate + N-acetyl-alpha-D-glucosaminyl-di-trans,octa-cis-undecaprenyl diphosphate = beta-D-ManNAcA-(1-&gt;4)-alpha-D-GlcNAc-di-trans,octa-cis-undecaprenyl diphosphate + UDP + H(+). It participates in bacterial outer membrane biogenesis; enterobacterial common antigen biosynthesis. In terms of biological role, catalyzes the synthesis of Und-PP-GlcNAc-ManNAcA (Lipid II), the second lipid-linked intermediate involved in enterobacterial common antigen (ECA) synthesis. The protein is UDP-N-acetyl-D-mannosaminuronic acid transferase of Escherichia coli (strain ATCC 8739 / DSM 1576 / NBRC 3972 / NCIMB 8545 / WDCM 00012 / Crooks).